The chain runs to 324 residues: NAD(P)H-dependent D-xylose reductase xyl1 (324 aa).

The active-site Proton donor is the tyrosine 50. Substrate is bound at residue histidine 112. Residues 168–169 (SN), 217–226 (SSFGPTGFME), and 273–283 (KTSRPEVMAQN) each bind NAD(+).

Belongs to the aldo/keto reductase family.

It catalyses the reaction an alditol + NAD(+) = an aldose + NADH + H(+). The enzyme catalyses an alditol + NADP(+) = an aldose + NADPH + H(+). It carries out the reaction xylitol + NAD(+) = D-xylose + NADH + H(+). The catalysed reaction is xylitol + NADP(+) = D-xylose + NADPH + H(+). Its pathway is carbohydrate metabolism; D-xylose degradation. It functions in the pathway carbohydrate degradation; L-arabinose degradation via L-arabinitol; D-xylulose 5-phosphate from L-arabinose (fungal route): step 1/5. Its function is as follows. Catalyzes the initial reaction in the xylose utilization pathway by reducing D-xylose into xylitol. Xylose is a major component of hemicelluloses such as xylan. Most fungi utilize D-xylose via three enzymatic reactions, xylose reductase (XR), xylitol dehydrogenase (XDH), and xylulokinase, to form xylulose 5-phosphate, which enters pentose phosphate pathway. Also major aldose reductase in pentose and D-galactose catabolism. Reduces the pentose L-arabinose and the hexose D-galactose to their respective polyols. Responsible for extracellular beta-galactosidase formation and cellulase induction during growth on lactose. The chain is NAD(P)H-dependent D-xylose reductase xyl1 (xyl1) from Hypocrea jecorina (Trichoderma reesei).